The chain runs to 216 residues: 3-isopropylmalate dehydratase small subunit (216 aa).

Belongs to the LeuD family. LeuD type 1 subfamily. Heterodimer of LeuC and LeuD.

The enzyme catalyses (2R,3S)-3-isopropylmalate = (2S)-2-isopropylmalate. It functions in the pathway amino-acid biosynthesis; L-leucine biosynthesis; L-leucine from 3-methyl-2-oxobutanoate: step 2/4. Catalyzes the isomerization between 2-isopropylmalate and 3-isopropylmalate, via the formation of 2-isopropylmaleate. In Marinomonas sp. (strain MWYL1), this protein is 3-isopropylmalate dehydratase small subunit.